A 238-amino-acid polypeptide reads, in one-letter code: uncharacterized protein (238 aa).

A run of 7 helical transmembrane segments spans residues 22–42, 49–69, 78–98, 105–125, 141–161, 166–186, and 208–228; these read VYGW…GLYA, LFSL…YIQA, AVMG…GTMV, FGGG…GLSA, ILML…VVSL, PLMY…LTVV, and LSLI…WYLL.

The protein belongs to the BI1 family.

The protein localises to the cell membrane. This is an uncharacterized protein from Chlamydia muridarum (strain MoPn / Nigg).